The sequence spans 282 residues: MAKILYGNEVALKIKEDLNLRIGKLKEKNIIPKLAILRMGNKPDDIAYERSIIKSCEKLNIETKVEELNEDILEEDFLKLMESLNNEKETHGILVFRPYPKHLNENIINSSIALNKDVDCMHPLNLERIFEGDLNGFMPCTPEAVIEILKYYDIDLKGKNIVIINRSMVVGKPLSMMVLSHNATVTICHSKTIDLPSITKRADIVVTAIGKAKLIKEEYFNEDSIVIDVSINVDENGKLCGDVDFENVKEKVGAITPVPKGVGSVTTTLLLKHIVDAAERNS.

Residues 165–167, Ser190, and Ile231 each bind NADP(+); that span reads NRS.

Belongs to the tetrahydrofolate dehydrogenase/cyclohydrolase family. As to quaternary structure, homodimer.

It carries out the reaction (6R)-5,10-methylene-5,6,7,8-tetrahydrofolate + NADP(+) = (6R)-5,10-methenyltetrahydrofolate + NADPH. It catalyses the reaction (6R)-5,10-methenyltetrahydrofolate + H2O = (6R)-10-formyltetrahydrofolate + H(+). Its pathway is one-carbon metabolism; tetrahydrofolate interconversion. Functionally, catalyzes the oxidation of 5,10-methylenetetrahydrofolate to 5,10-methenyltetrahydrofolate and then the hydrolysis of 5,10-methenyltetrahydrofolate to 10-formyltetrahydrofolate. The protein is Bifunctional protein FolD of Clostridium botulinum (strain 657 / Type Ba4).